The primary structure comprises 395 residues: Protein PIN-LIKES 7 (395 aa).

Topologically, residues 1-8 are lumenal; it reads MGFLELLE. The helical transmembrane segment at 9-29 threads the bilayer; sequence VASMPIVQVLLISVLGAFLAT. Residues 30–45 lie on the Cytoplasmic side of the membrane; it reads DYCSLLSADTRRSVNK. Residues 46–66 form a helical membrane-spanning segment; sequence LVFVVFTPCIMFANLAETVTL. Topologically, residues 67–73 are lumenal; the sequence is QDIISWW. A helical membrane pass occupies residues 74–94; that stretch reads FMPINVGITFLVGGILGWLVV. Over 95-106 the chain is Cytoplasmic; it reads KLLNPKPQLHGL. A helical membrane pass occupies residues 107-127; that stretch reads IIATCASGNMGNLMLILVPAI. The Lumenal segment spans residues 128–142; sequence CDEEGSPFGNRSVCR. A helical transmembrane segment spans residues 143–163; sequence SIGLSYASFSMALGGFYIWTY. The Cytoplasmic segment spans residues 164-232; sequence SYQLVRSSAT…KDLLHQILEE (69 aa). Residues 233-253 form a helical membrane-spanning segment; sequence LFAPPTIGAILGFVFGATNWL. Residues 254–272 lie on the Lumenal side of the membrane; that stretch reads RNLIIGENAPLRVIQDSVK. A helical transmembrane segment spans residues 273 to 293; the sequence is LLGEGTIPCITLILGGNLIQG. Over 294-302 the chain is Cytoplasmic; sequence LRSSAVKKS. The chain crosses the membrane as a helical span at residues 303–323; sequence VIVGVIIVRYILLPVVGVGVV. Topologically, residues 324-340 are lumenal; it reads QLAGNLGYLPPDPLFRY. Residues 341–361 form a helical membrane-spanning segment; the sequence is VLMLQFALPPAMNISTMAQLF. The Cytoplasmic segment spans residues 362 to 369; it reads DVAQDECS. Residues 370–390 form a helical membrane-spanning segment; that stretch reads VIFLWTYLVASLALTVWSTIF. Over 391–395 the chain is Lumenal; the sequence is LSILS.

Belongs to the auxin efflux carrier (TC 2.A.69.2) family. As to expression, expressed in seedlings, rosette and cauline leaves, stems and flowers.

The protein localises to the endoplasmic reticulum membrane. In terms of biological role, involved in cellular auxin homeostasis by regulating auxin metabolism. Regulates intracellular auxin accumulation at the endoplasmic reticulum and thus auxin availability for nuclear auxin signaling. The protein is Protein PIN-LIKES 7 of Arabidopsis thaliana (Mouse-ear cress).